We begin with the raw amino-acid sequence, 1138 residues long: Nonsense-mediated mRNA decay factor SMG7 (1138 aa).

Ser-2 is modified (N-acetylserine). TPR repeat units follow at residues 152 to 185 and 187 to 219; these read QHCL…VPSN and QPYN…KFPF. Disordered stretches follow at residues 515-612, 649-745, 838-871, 990-1090, and 1106-1138; these read ATDG…LPSR, STAH…YQQA, QPNM…KSSP, SLPA…PSME, and SSMM…NPPH. Position 519 is a phosphoserine (Ser-519). The span at 525–537 shows a compositional bias: polar residues; the sequence is VLSTGRNPSNSCD. The span at 548 to 582 shows a compositional bias: basic and acidic residues; it reads ENIKPREVNQGRSFPPKEVKSQTELRKTPVSEARK. Thr-575 carries the post-translational modification Phosphothreonine. 2 stretches are compositionally biased toward polar residues: residues 584 to 597 and 649 to 673; these read PVTQ…NSQF and STAH…SQQR. Residues 674-721 show a composition bias toward low complexity; it reads PSGPGPMNQGPQQSQPPSQPPLTSLPAQPTAQSTSQLQVQALAQQQQS. Phosphoserine occurs at positions 732 and 848. Positions 854-868 are enriched in basic and acidic residues; the sequence is PEQDPVPRMPFEDPK. The segment covering 990-999 has biased composition (polar residues); it reads SLPASSDHST. Residues 1000-1026 are compositionally biased toward low complexity; sequence PASQSPHSSNPSSLPSSPPTHNHNSAP. Residues 1037-1051 are compositionally biased toward basic and acidic residues; sequence DNRDRRPADRWKTDK. Over residues 1063–1082 the composition is skewed to polar residues; it reads SATSSSESSWHQASTPSGTW. Positions 1118–1132 are enriched in low complexity; that stretch reads QLLMQQKQKQQRGQG.

Part of a complex that contains SMG5, SMG7, PPP2CA, a short isoform of UPF3A (isoform UPF3AS, but not isoform UPF3AL) and phosphorylated UPF1. Interacts with DHX34; the interaction is RNA-independent.

The protein resides in the cytoplasm. Its subcellular location is the nucleus. In terms of biological role, plays a role in nonsense-mediated mRNA decay. Recruits UPF1 to cytoplasmic mRNA decay bodies. Together with SMG5 is thought to provide a link to the mRNA degradation machinery involving exonucleolytic pathways, and to serve as an adapter for UPF1 to protein phosphatase 2A (PP2A), thereby triggering UPF1 dephosphorylation. This chain is Nonsense-mediated mRNA decay factor SMG7, found in Mus musculus (Mouse).